Here is a 182-residue protein sequence, read N- to C-terminus: MSKQLTAQAPVDPIVLGKMGSSYGIRGWLRVFSSTEDAESIFDYQPWFIQKAGQWQQVQLESWKHHNQDMIIKLKGVDDRDAANLLTNCEIVVDSSQLPQLEEGDYYWKDLMGCQVVTTEGYDLGKVVDMMETGSNDVLVIKANLKDAFGIKERLVPFLDGQVIKKVDLTTRSIEVDWDPGF.

Positions Glu103–Phe182 constitute a PRC barrel domain.

Belongs to the RimM family. In terms of assembly, binds ribosomal protein uS19.

The protein localises to the cytoplasm. In terms of biological role, an accessory protein needed during the final step in the assembly of 30S ribosomal subunit, possibly for assembly of the head region. Essential for efficient processing of 16S rRNA. May be needed both before and after RbfA during the maturation of 16S rRNA. It has affinity for free ribosomal 30S subunits but not for 70S ribosomes. This Escherichia coli O139:H28 (strain E24377A / ETEC) protein is Ribosome maturation factor RimM.